Consider the following 78-residue polypeptide: Dihydrofolate reductase type 2 (78 aa).

Residues 32 to 36 (KKSGA) and 66 to 69 (VQIY) each bind NADP(+). Ile68 contributes to the substrate binding site.

Homotetramer.

It carries out the reaction (6S)-5,6,7,8-tetrahydrofolate + NADP(+) = 7,8-dihydrofolate + NADPH + H(+). It participates in cofactor biosynthesis; tetrahydrofolate biosynthesis; 5,6,7,8-tetrahydrofolate from 7,8-dihydrofolate: step 1/1. Functionally, key enzyme in folate metabolism. Catalyzes an essential reaction for de novo glycine and purine synthesis, and for DNA precursor synthesis. This chain is Dihydrofolate reductase type 2, found in Escherichia coli.